Consider the following 245-residue polypeptide: Demethylmenaquinone methyltransferase (245 aa).

Residues threonine 70, aspartate 90, and 118-119 (DC) contribute to the S-adenosyl-L-methionine site.

The protein belongs to the class I-like SAM-binding methyltransferase superfamily. MenG/UbiE family.

The enzyme catalyses a 2-demethylmenaquinol + S-adenosyl-L-methionine = a menaquinol + S-adenosyl-L-homocysteine + H(+). Its pathway is quinol/quinone metabolism; menaquinone biosynthesis; menaquinol from 1,4-dihydroxy-2-naphthoate: step 2/2. Functionally, methyltransferase required for the conversion of demethylmenaquinol (DMKH2) to menaquinol (MKH2). In Bacteroides fragilis (strain ATCC 25285 / DSM 2151 / CCUG 4856 / JCM 11019 / LMG 10263 / NCTC 9343 / Onslow / VPI 2553 / EN-2), this protein is Demethylmenaquinone methyltransferase.